Reading from the N-terminus, the 146-residue chain is Cytochrome c-type biogenesis protein CcmE (146 aa).

Residues 1 to 8 (MNPRRKKR) lie on the Cytoplasmic side of the membrane. The chain crosses the membrane as a helical; Signal-anchor for type II membrane protein span at residues 9–29 (LGLILALVLGASATVGLMLYA). The Periplasmic portion of the chain corresponds to 30–146 (LNQNMDLFYT…EVAEAMKKTH (117 aa)). Residues histidine 129 and tyrosine 133 each coordinate heme.

This sequence belongs to the CcmE/CycJ family.

The protein localises to the cell inner membrane. Heme chaperone required for the biogenesis of c-type cytochromes. Transiently binds heme delivered by CcmC and transfers the heme to apo-cytochromes in a process facilitated by CcmF and CcmH. The sequence is that of Cytochrome c-type biogenesis protein CcmE from Aliivibrio salmonicida (strain LFI1238) (Vibrio salmonicida (strain LFI1238)).